A 297-amino-acid polypeptide reads, in one-letter code: Ribosomal RNA small subunit methyltransferase A (297 aa).

S-adenosyl-L-methionine contacts are provided by Asn-31, Leu-33, Gly-58, Glu-79, Asp-104, and Asn-129.

The protein belongs to the class I-like SAM-binding methyltransferase superfamily. rRNA adenine N(6)-methyltransferase family. RsmA subfamily.

The protein resides in the cytoplasm. The catalysed reaction is adenosine(1518)/adenosine(1519) in 16S rRNA + 4 S-adenosyl-L-methionine = N(6)-dimethyladenosine(1518)/N(6)-dimethyladenosine(1519) in 16S rRNA + 4 S-adenosyl-L-homocysteine + 4 H(+). Functionally, specifically dimethylates two adjacent adenosines (A1518 and A1519) in the loop of a conserved hairpin near the 3'-end of 16S rRNA in the 30S particle. May play a critical role in biogenesis of 30S subunits. In Staphylococcus aureus (strain MRSA252), this protein is Ribosomal RNA small subunit methyltransferase A.